A 568-amino-acid polypeptide reads, in one-letter code: Nucleoprotein (568 aa).

A binding site for the cap structure m7GTP region spans residues 54–240 (MRKEKRDDSD…IDGNKSAINI (187 aa)). Positions 388 and 390 each coordinate Mn(2+). Glu-398, Cys-505, His-508, and Cys-528 together coordinate Zn(2+). Asp-532 lines the Mn(2+) pocket.

It belongs to the arenaviridae nucleocapsid protein family. Homomultimerizes to form the nucleocapsid. Binds to viral genomic RNA. Interacts with glycoprotein G2. Interacts with protein Z; this interaction probably directs the encapsidated genome to budding sites. Interacts with protein L; this interaction does not interfere with Z-L interaction. Interacts with host IKBKE (via Protein kinase domain); the interaction inhibits IKBKE kinase activity.

Its subcellular location is the virion. It localises to the host cytoplasm. In terms of biological role, encapsidates the genome, protecting it from nucleases. The encapsidated genomic RNA is termed the nucleocapsid (NC). Serves as template for viral transcription and replication. The increased presence of protein N in host cell does not seem to trigger the switch from transcription to replication as observed in other negative strain RNA viruses. Through the interaction with host IKBKE, strongly inhibits the phosphorylation and nuclear translocation of host IRF3, a protein involved in interferon activation pathway, leading to the inhibition of interferon-beta and IRF3-dependent promoters activation. Also encodes a functional 3'-5' exoribonuclease that degrades preferentially dsRNA substrates and thereby participates in the suppression of interferon induction. The sequence is that of Nucleoprotein from Praomys (African soft-furred rats).